We begin with the raw amino-acid sequence, 446 residues long: Calcium-binding and coiled-coil domain-containing protein 2 (446 aa).

Residues 133–136 carry the CLIR motif; the sequence is ILVV. A coiled-coil region spans residues 137–349; sequence TTQGEVEEIE…RENSRLLSYM (213 aa). The short motif at 203–206 is the LIR-like element; the sequence is DYWE. A disordered region spans residues 362–390; the sequence is TSDEGGARQNPGLAYGNPYSGIQESSSPS. The interaction with LGALS8 stretch occupies residues 371-381; that stretch reads NPGLAYGNPYS. Polar residues predominate over residues 381–390; that stretch reads SGIQESSSPS. An interaction with MYO6 region spans residues 395–446; sequence KKCPICKADDICDHTLEQQQMQPLCFNCPICDKIFPATEKQIFEDHVFCHSL. The UBZ1-type zinc-finger motif lies at 419-444; sequence CFNCPICDKIFPATEKQIFEDHVFCH. Residues C422, C425, H440, and H444 each coordinate Zn(2+). A Phosphoserine modification is found at S445.

This sequence belongs to the CALCOCO family. In terms of assembly, dimer. Part of a complex consisting of CALCOCO2, TAX1BP1 and MYO6. Interacts with MYO6. Interacts with GEMIN4. Interacts with ATG8 family members MAP1LC3A, MAP1LC3B, GABARAP, GABARAPL1 and GABARAPL2. Interacts with ATG8 family member MAP1LC3C. Interacts with LGALS8. Interacts with TOM1; the interaction is indirect and is mediated by MYO6, which acts as a bridge between TOM1 and CALCOCO2. Interacts with AZI2. As to quaternary structure, (Microbial infection) Interacts with Lassa virus protein Z. (Microbial infection) Interacts with Mopeia virus protein Z. In terms of processing, (Microbial infection) Cleaved by S.pyogenes SpeB protease; leading to its degradation. Degradation by SpeB prevents autophagy, promoting to S.pyogenes intracellular replication. As to expression, expressed in all tissues tested with highest expression in skeletal muscle and lowest in brain.

The protein resides in the cytoplasm. Its subcellular location is the perinuclear region. The protein localises to the cytoskeleton. It localises to the cytoplasmic vesicle. It is found in the autophagosome membrane. Functionally, xenophagy-specific receptor required for autophagy-mediated intracellular bacteria degradation. Acts as an effector protein of galectin-sensed membrane damage that restricts the proliferation of infecting pathogens such as Salmonella typhimurium upon entry into the cytosol by targeting LGALS8-associated bacteria for autophagy. Initially orchestrates bacteria targeting to autophagosomes and subsequently ensures pathogen degradation by regulating pathogen-containing autophagosome maturation. Bacteria targeting to autophagosomes relies on its interaction with MAP1LC3A, MAP1LC3B and/or GABARAPL2, whereas regulation of pathogen-containing autophagosome maturation requires the interaction with MAP3LC3C. May play a role in ruffle formation and actin cytoskeleton organization and seems to negatively regulate constitutive secretion. The polypeptide is Calcium-binding and coiled-coil domain-containing protein 2 (CALCOCO2) (Homo sapiens (Human)).